A 157-amino-acid chain; its full sequence is Type II restriction enzyme PvuII (157 aa).

Mg(2+) contacts are provided by Asp58 and Glu68.

As to quaternary structure, homodimer. The cofactor is Mg(2+).

The enzyme catalyses Endonucleolytic cleavage of DNA to give specific double-stranded fragments with terminal 5'-phosphates.. Its function is as follows. A P subtype restriction enzyme that recognizes the double-stranded sequence 5'-CAGCTG-3' and cleaves after G-3. This is Type II restriction enzyme PvuII (pvuIIR) from Proteus hauseri.